A 100-amino-acid chain; its full sequence is Urease subunit gamma (100 aa).

Belongs to the urease gamma subunit family. Heterotrimer of UreA (gamma), UreB (beta) and UreC (alpha) subunits. Three heterotrimers associate to form the active enzyme.

The protein localises to the cytoplasm. It catalyses the reaction urea + 2 H2O + H(+) = hydrogencarbonate + 2 NH4(+). Its pathway is nitrogen metabolism; urea degradation; CO(2) and NH(3) from urea (urease route): step 1/1. This is Urease subunit gamma from Ruegeria sp. (strain TM1040) (Silicibacter sp.).